Reading from the N-terminus, the 844-residue chain is MAEITVGQLAQQTNKEVSTLLKQLKSFGIEKSSEKDTLTPEEMKTLLDKINSAKNTVTRKKVTSLKLDGKHKINVSVKKKRRVAKKVEEQSPAKVEESIVEKPQAAVDVKDNKAVESVERNSVNLVQPQQEKPVTKPVIKDNGFKITAMPEVKIQENNSQDEEKSSEDKSTESKNNKKKSPKKVFTESGNNTNTKYKREEEEKKSKAKKASGKGFKKANPRQLSQLAGDLESFDEFGSKKGKLKAPKVKKQEFTMPVESAVKTIEIREGITVSDLANRMAVKGAEIVKVLFNMGVMATINQSLDQDTAVLIVEEMGHKYTLHNENALEEAVTTVDRSLHKKISRAPVVTIMGHVDHGKTSLLDYIRKARVVAGEAGGITQHIGAYSVKTSKGAITFLDTPGHEAFTSMRARGAKSTDIVILVVAADDGVMPQTEEAIQHAKAAGVPIVVAVNKIDKPDADPDKVVGELAQRNVIPESWGGDVMFANVSAKTGEGVAELLDAVLLQSEVLELEAFAEGLAEGVVIESRLEKGRGPVATVLVQNGSLKQGDNILCGTEYGRVRAMHDDLGKQIKVAGPATPVEILGLSGVPAAGDDMVVIENEKKAKELAAQRSQRQKEAKIAQEQSLKLSNMFSNMGKEGEQQTLKIILKGDVQGSVEAIRESLLKLSTDEVKVDIIASGIGAITSSDVTLAVASTAVIIGFNVRADSAAKKLAEVDGVELRYYNIIYDLIDDVKKAMTGLLSPDMKEQIIGIAEVREVYRSSKFGSIAGCMVVEGAVKRTNPIRVLRDNVVIYEGTLESLKRFKDDASEVKKGMECGIGVKNYNDVREGDQIEVFEVIEVAKEL.

A compositionally biased stretch (polar residues) spans 120 to 132 (RNSVNLVQPQQEK). The segment at 120–220 (RNSVNLVQPQ…SGKGFKKANP (101 aa)) is disordered. Residues 161–175 (DEEKSSEDKSTESKN) show a composition bias toward basic and acidic residues. The segment covering 205–219 (SKAKKASGKGFKKAN) has biased composition (basic residues). The 168-residue stretch at 343 to 510 (SRAPVVTIMG…AVLLQSEVLE (168 aa)) folds into the tr-type G domain. Residues 352-359 (GHVDHGKT) are G1. Position 352 to 359 (352 to 359 (GHVDHGKT)) interacts with GTP. The interval 377 to 381 (GITQH) is G2. A G3 region spans residues 398-401 (DTPG). Residues 398–402 (DTPGH) and 452–455 (NKID) contribute to the GTP site. Positions 452–455 (NKID) are G4. The tract at residues 488–490 (SAK) is G5.

It belongs to the TRAFAC class translation factor GTPase superfamily. Classic translation factor GTPase family. IF-2 subfamily.

It localises to the cytoplasm. Its function is as follows. One of the essential components for the initiation of protein synthesis. Protects formylmethionyl-tRNA from spontaneous hydrolysis and promotes its binding to the 30S ribosomal subunits. Also involved in the hydrolysis of GTP during the formation of the 70S ribosomal complex. The sequence is that of Translation initiation factor IF-2 from Francisella philomiragia subsp. philomiragia (strain ATCC 25017 / CCUG 19701 / FSC 153 / O#319-036).